Reading from the N-terminus, the 221-residue chain is GTP cyclohydrolase 1 (221 aa).

The Zn(2+) site is built by cysteine 111, histidine 114, and cysteine 182.

The protein belongs to the GTP cyclohydrolase I family. As to quaternary structure, homomer.

It carries out the reaction GTP + H2O = 7,8-dihydroneopterin 3'-triphosphate + formate + H(+). Its pathway is cofactor biosynthesis; 7,8-dihydroneopterin triphosphate biosynthesis; 7,8-dihydroneopterin triphosphate from GTP: step 1/1. The polypeptide is GTP cyclohydrolase 1 (Erwinia tasmaniensis (strain DSM 17950 / CFBP 7177 / CIP 109463 / NCPPB 4357 / Et1/99)).